The chain runs to 404 residues: Glycosylated lysosomal membrane protein (404 aa).

The first 35 residues, Met1–Gly35, serve as a signal peptide directing secretion. Over Glu36–His371 the chain is Lumenal. Residues Asn65, Asn134, Asn159, Asn186, and Asn229 are each glycosylated (N-linked (GlcNAc...) asparagine). Residues His372–Leu392 form a helical membrane-spanning segment. The Cytoplasmic portion of the chain corresponds to His393–Asn404. The Lysosomal targeting motif signature appears at Tyr400–Asn404.

Belongs to the GLMP family. In terms of assembly, interacts (via lumenal domain) with lysosomal protein MFSD1; the interaction starts while both proteins are still in the endoplasmic reticulum and is required for stabilization of MFSD1 in lysosomes but has no direct effect on its targeting to lysosomes or transporter activity. In terms of processing, highly N-glycosylated. N-glycosylation is essential for GLMP stability and for MFSD1 lysosomal localization.

Its subcellular location is the lysosome membrane. In terms of biological role, required to protect lysosomal transporter MFSD1 from lysosomal proteolysis and for MFSD1 lysosomal localization. This Pongo abelii (Sumatran orangutan) protein is Glycosylated lysosomal membrane protein.